The following is a 492-amino-acid chain: MASIDNESIIKSVPQKGFFGHPRGLFTLFFTEFWERFSYYGMRAILLYYLYTETVNGGLGFDKGTAVAIMSIYGSLVYMSTIIGGWLADRVFGTANTVFYGGIFIMFGHIALAYPGSSIAFYISMVLIIVGTGLLKPNVSSVVGDLYTKEDPRRDSGFSIFYMGINLGGLLAPLIVGTLGQKYNYHLGFGAAAVGMLLGLIVFALTRKKNLGLAGSNVPNPLSKKSAIGTGIGVIIVAIAVIISVQTGVLTIKRFIDLVSILGILIPVIYFIIMFTSKKADKTEKSRLAAYVPLFIGAVMFWAIQEQGATILAVYADERIRLSLGGFELQSSWFQSLNPLFVVIFAPIFAWLWMKLGKRQPSTPVKFSIGIILAGLSFIIMVFPAMQGKEALVSPLWLVLSFLLVVLGELCLSPVGLSVTTKLAPAAFSAQTMSMWFLTNAAAQAINAQVAGLFDKIPETMYFGTIGLISIVLGGILLLLSPVIKRAMKGVL.

Helical transmembrane passes span 67 to 87 (VAIMSIYGSLVYMSTIIGGWL), 88 to 108 (ADRVFGTANTVFYGGIFIMFG), 110 to 130 (IALAYPGSSIAFYISMVLIIV), 157 to 177 (GFSIFYMGINLGGLLAPLIVG), 185 to 205 (YHLGFGAAAVGMLLGLIVFAL), 232 to 252 (IGVIIVAIAVIISVQTGVLTI), 255 to 275 (FIDLVSILGILIPVIYFIIMF), 294 to 314 (LFIGAVMFWAIQEQGATILAV), 333 to 353 (WFQSLNPLFVVIFAPIFAWLW), 367 to 387 (FSIGIILAGLSFIIMVFPAMQ), 392 to 412 (LVSPLWLVLSFLLVVLGELCL), 434 to 454 (SMWFLTNAAAQAINAQVAGLF), and 464 to 484 (GTIGLISIVLGGILLLLSPVI).

It belongs to the major facilitator superfamily. Proton-dependent oligopeptide transporter (POT/PTR) (TC 2.A.17) family.

The protein resides in the cell membrane. This is an uncharacterized protein from Bacillus subtilis (strain 168).